We begin with the raw amino-acid sequence, 99 residues long: SAGA-associated factor 11 (99 aa).

An SGF11-type zinc finger spans residues 71-92 (IHCENCGRDVSANRLAAHLQRC).

This sequence belongs to the SGF11 family. Component of the 1.8 MDa SAGA transcription coactivator-HAT complex. SAGA is built of 5 distinct domains with specialized functions. Within the SAGA complex, SUS1, SGF11, SGF73 and UBP8 form an additional subcomplex of SAGA called the DUB module (deubiquitination module). Interacts directly with SGF73, SUS1 and UBP8.

The protein localises to the nucleus. Its function is as follows. Functions as a component of the transcription regulatory histone acetylation (HAT) complex SAGA. At the promoters, SAGA is required for recruitment of the basal transcription machinery. It influences RNA polymerase II transcriptional activity through different activities such as TBP interaction and promoter selectivity, interaction with transcription activators, and chromatin modification through histone acetylation and deubiquitination. SAGA acetylates nucleosomal histone H3 to some extent (to form H3K9ac, H3K14ac, H3K18ac and H3K23ac). SAGA interacts with DNA via upstream activating sequences (UASs). Involved in transcriptional regulation of a subset of SAGA-regulated genes. Within the SAGA complex, participates in a subcomplex, that specifically deubiquitinates histones H2B. This is SAGA-associated factor 11 from Saccharomyces cerevisiae (strain RM11-1a) (Baker's yeast).